Consider the following 576-residue polypeptide: Formate--tetrahydrofolate ligase (576 aa).

64 to 71 (TPLGEGKT) is an ATP binding site.

It belongs to the formate--tetrahydrofolate ligase family.

The enzyme catalyses (6S)-5,6,7,8-tetrahydrofolate + formate + ATP = (6R)-10-formyltetrahydrofolate + ADP + phosphate. It functions in the pathway one-carbon metabolism; tetrahydrofolate interconversion. The chain is Formate--tetrahydrofolate ligase from Aeromonas hydrophila subsp. hydrophila (strain ATCC 7966 / DSM 30187 / BCRC 13018 / CCUG 14551 / JCM 1027 / KCTC 2358 / NCIMB 9240 / NCTC 8049).